The primary structure comprises 136 residues: Small ribosomal subunit protein uS19 (136 aa).

Residues 117–136 form a disordered region; the sequence is VQHGDPGMGATRSSMFVPLK.

Belongs to the universal ribosomal protein uS19 family.

Functionally, protein S19 forms a complex with S13 that binds strongly to the 16S ribosomal RNA. This is Small ribosomal subunit protein uS19 from Methanobrevibacter smithii (strain ATCC 35061 / DSM 861 / OCM 144 / PS).